A 1357-amino-acid chain; its full sequence is Ubiquitin carboxyl-terminal hydrolase 19 (1357 aa).

Disordered stretches follow at residues Met-1 to Asp-52, Leu-162 to Ala-239, and Val-275 to Asp-296. Residues Met-1 to Tyr-1330 are Cytoplasmic-facing. Composition is skewed to basic and acidic residues over residues Asp-28 to Asp-52 and Ser-171 to Asn-182. The region spanning Lys-51–Leu-140 is the CS 1 domain. Low complexity predominate over residues Ser-194–Ala-206. Phosphoserine is present on residues Ser-221 and Ser-283. In terms of domain architecture, CS 2 spans Leu-321–Glu-423. Positions Ala-432–Asp-479 are disordered. Positions Pro-437 to Gly-457 are enriched in low complexity. Basic and acidic residues predominate over residues Glu-459–Asp-475. Residues Thr-536–Arg-1253 form the USP domain. The active-site Nucleophile is the Cys-545. Zn(2+) contacts are provided by Cys-830, Cys-833, Cys-847, Cys-850, Cys-856, Cys-860, His-868, and Cys-872. Residues Cys-830–Cys-872 form an MYND-type zinc finger. The segment at Asp-962–Ser-981 is disordered. Residue His-1204 is the Proton acceptor of the active site. Basic and acidic residues predominate over residues Arg-1259–Asp-1271. Disordered regions lie at residues Arg-1259 to Ala-1278 and Ala-1292 to Pro-1320. A helical transmembrane segment spans residues Phe-1331 to Val-1351. Over Ser-1352–Arg-1357 the chain is Lumenal.

As to quaternary structure, interacts with RNF123. Interacts with BIRC2/c-IAP1, BIRC3/c-IAP2 and XIAP/BIRC4. Interacts with HIF1A (via N-terminus). As to expression, expressed in testis, heart, kidney and skeletal muscle. Low levels of expression are detectable in all other tissues screened.

Its subcellular location is the endoplasmic reticulum membrane. It carries out the reaction Thiol-dependent hydrolysis of ester, thioester, amide, peptide and isopeptide bonds formed by the C-terminal Gly of ubiquitin (a 76-residue protein attached to proteins as an intracellular targeting signal).. Its function is as follows. Deubiquitinating enzyme that regulates the degradation of various proteins by removing ubiquitin moieties, thereby preventing their proteasomal degradation. Stabilizes RNF123, which promotes CDKN1B degradation and contributes to cell proliferation. Decreases the levels of ubiquitinated proteins during skeletal muscle formation and acts to repress myogenesis. Modulates transcription of major myofibrillar proteins. Also involved in turnover of endoplasmic-reticulum-associated degradation (ERAD) substrates. Mechanistically, deubiquitinates and thereby stabilizes several E3 ligases involved in the ERAD pathway including SYVN1 or MARCHF6. Regulates the stability of other E3 ligases including BIRC2/c-IAP1 and BIRC3/c-IAP2 by preventing their ubiquitination. Required for cells to mount an appropriate response to hypoxia by rescuing HIF1A from degradation in a non-catalytic manner and by mediating the deubiquitination of FUNDC1. Attenuates mitochondrial damage and ferroptosis by targeting and stabilizing NADPH oxidase 4/NOX4. Negatively regulates TNF-alpha- and IL-1beta-triggered NF-kappa-B activation by hydrolyzing 'Lys-27'- and 'Lys-63'-linked polyubiquitin chains from MAP3K7. Modulates also the protein level and aggregation of polyQ-expanded huntingtin/HTT through HSP90AA1. This is Ubiquitin carboxyl-terminal hydrolase 19 (Usp19) from Rattus norvegicus (Rat).